A 767-amino-acid chain; its full sequence is DNA topoisomerase 1 (767 aa).

Over residues 1 to 23 the composition is skewed to basic and acidic residues; sequence MSGDHLHNDSQIEADFRLNDSHK. A disordered region spans residues 1–200; it reads MSGDHLHNDS…DNKKKKAKKE (200 aa). S2 bears the N-acetylserine mark. Residues S2 and S10 each carry the phosphoserine modification. Basic residues predominate over residues 24–39; the sequence is HKDKHKDREHRHKEHK. A compositionally biased stretch (basic and acidic residues) spans 40–110; that stretch reads KDKDKDREKS…DAKIKKEKEN (71 aa). S59 is modified (phosphoserine). K103 is covalently cross-linked (Glycyl lysine isopeptide (Lys-Gly) (interchain with G-Cter in SUMO2)). K105 participates in a covalent cross-link: Glycyl lysine isopeptide (Lys-Gly) (interchain with G-Cter in SUMO); alternate. Residue K105 forms a Glycyl lysine isopeptide (Lys-Gly) (interchain with G-Cter in SUMO2); alternate linkage. S114 bears the Phosphoserine mark. K119 is covalently cross-linked (Glycyl lysine isopeptide (Lys-Gly) (interchain with G-Cter in SUMO); alternate). K119 participates in a covalent cross-link: Glycyl lysine isopeptide (Lys-Gly) (interchain with G-Cter in SUMO2); alternate. K119 participates in a covalent cross-link: Glycyl lysine isopeptide (Lys-Gly) (interchain with G-Cter in SUMO1); alternate. Positions 131–168 are enriched in basic and acidic residues; it reads PKEDIKPLKRPRDEDDADYKPKKIKTEDIKKEKKRKLE. Residues K136 and K150 each participate in a glycyl lysine isopeptide (Lys-Gly) (interchain with G-Cter in SUMO2) cross-link. K155 is covalently cross-linked (Glycyl lysine isopeptide (Lys-Gly) (interchain with G-Cter in SUMO); alternate). K155 is covalently cross-linked (Glycyl lysine isopeptide (Lys-Gly) (interchain with G-Cter in SUMO2); alternate). Residues K160 and K166 each participate in a glycyl lysine isopeptide (Lys-Gly) (interchain with G-Cter in SUMO2) cross-link. K174 participates in a covalent cross-link: Glycyl lysine isopeptide (Lys-Gly) (interchain with G-Cter in SUMO2); alternate. N6-acetyllysine; alternate is present on K174. Residues 181 to 200 show a composition bias toward basic and acidic residues; that stretch reads KDKDKKVAEPDNKKKKAKKE. Residue K206 forms a Glycyl lysine isopeptide (Lys-Gly) (interchain with G-Cter in SUMO2) linkage. K282 carries the N6-acetyllysine modification. Residue K338 forms a Glycyl lysine isopeptide (Lys-Gly) (interchain with G-Cter in SUMO2) linkage. Interaction with DNA stretches follow at residues 427–428 and 490–495; these read KY and RAGNEK. The region spanning 434–767 is the Topo IB-type catalytic domain; sequence SSRIKGEKDW…IDMTDEDYEF (334 aa). S508 is subject to Phosphoserine; by CK2. Residue K551 forms a Glycyl lysine isopeptide (Lys-Gly) (interchain with G-Cter in SUMO2) linkage. The segment at 587–589 is interaction with DNA; sequence TAK. Residues K644, K702, and K714 each participate in a glycyl lysine isopeptide (Lys-Gly) (interchain with G-Cter in SUMO2) cross-link. Y725 functions as the O-(3'-phospho-DNA)-tyrosine intermediate in the catalytic mechanism.

Belongs to the type IB topoisomerase family. Monomer. Interacts with ERCC6. Interacts with TPRN; TPRN interacts with a number of DNA damage response proteins, is recruited to sites of DNA damage and may play a role in DNA damage repair. Sumoylated. Lys-119 is the main site of sumoylation. Sumoylation plays a role in partitioning TOP1 between nucleoli and nucleoplasm. Levels are dramatically increased on camptothecin (CPT) treatment. Post-translationally, phosphorylation at Ser-508 by CK2 increases binding to supercoiled DNA and sensitivity to camptothecin.

Its subcellular location is the nucleus. The protein resides in the nucleolus. The protein localises to the nucleoplasm. It catalyses the reaction ATP-independent breakage of single-stranded DNA, followed by passage and rejoining.. Functionally, releases the supercoiling and torsional tension of DNA introduced during the DNA replication and transcription by transiently cleaving and rejoining one strand of the DNA duplex. Introduces a single-strand break via transesterification at a target site in duplex DNA. The scissile phosphodiester is attacked by the catalytic tyrosine of the enzyme, resulting in the formation of a DNA-(3'-phosphotyrosyl)-enzyme intermediate and the expulsion of a 5'-OH DNA strand. The free DNA strand then rotates around the intact phosphodiester bond on the opposing strand, thus removing DNA supercoils. Finally, in the religation step, the DNA 5'-OH attacks the covalent intermediate to expel the active-site tyrosine and restore the DNA phosphodiester backbone. Regulates the alternative splicing of tissue factor (F3) pre-mRNA in endothelial cells. Involved in the circadian transcription of the core circadian clock component BMAL1 by altering the chromatin structure around the ROR response elements (ROREs) on the BMAL1 promoter. This is DNA topoisomerase 1 (Top1) from Rattus norvegicus (Rat).